The sequence spans 89 residues: Small ribosomal subunit protein bS20 (89 aa).

Residues 1–11 (MANIKSQIKRN) show a composition bias toward polar residues. The segment at 1–22 (MANIKSQIKRNLTNEKRRLRNK) is disordered.

The protein belongs to the bacterial ribosomal protein bS20 family.

In terms of biological role, binds directly to 16S ribosomal RNA. The chain is Small ribosomal subunit protein bS20 from Frankia casuarinae (strain DSM 45818 / CECT 9043 / HFP020203 / CcI3).